The following is a 147-amino-acid chain: Transthyretin (147 aa).

The signal sequence occupies residues 1–20; sequence MASRRLLLLCLAGLVLVTEA. The residue at position 30 (C30) is a Sulfocysteine. K35 lines the L-thyroxine pocket. At E62 the chain carries 4-carboxyglutamate. E74 lines the L-thyroxine pocket. N-linked (GlcNAc...) asparagine glycosylation occurs at N118. S137 is an L-thyroxine binding site.

The protein belongs to the transthyretin family. As to quaternary structure, homotetramer. Dimer of dimers. In the homotetramer, subunits assemble around a central channel that can accommodate two ligand molecules. Interacts with RBP4. Post-translationally, sulfonation of the reactive cysteine Cys-30 enhances the stability of the native conformation of TTR, avoiding misassembly of the protein leading to amyloid formation. In terms of tissue distribution, detected in serum (at protein level). Detected in liver.

It is found in the secreted. Its function is as follows. Thyroid hormone-binding protein. Probably transports thyroxine from the bloodstream to the brain. This is Transthyretin (TTR) from Sorex araneus (Eurasian common shrew).